The sequence spans 233 residues: C-type lectin domain family 2 member D6 (233 aa).

The disordered stretch occupies residues 1–45 (MPSSAHLQDSPPLLSRTLTQNEGQTSLRQSSSCGPSATSASESLS). Over 1–73 (MPSSAHLQDS…GIILPESPAK (73 aa)) the chain is Cytoplasmic. Positions 16–29 (RTLTQNEGQTSLRQ) are enriched in polar residues. The span at 30–43 (SSSCGPSATSASES) shows a compositional bias: low complexity. A helical; Signal-anchor for type II membrane protein transmembrane segment spans residues 74–94 (LLCCCAVIVVLSVAVVALSVA). Over 95–233 (LSVKKTPQIS…KLNSYTSQCQ (139 aa)) the chain is Extracellular. One can recognise a C-type lectin domain in the interval 119 to 230 (VGNKCYYFNE…ICSKLNSYTS (112 aa)). Asn-132 is a glycosylation site (N-linked (GlcNAc...) asparagine).

The protein resides in the cell membrane. Lectin-type cell surface receptor. In Rattus norvegicus (Rat), this protein is C-type lectin domain family 2 member D6 (Clec2d6).